The primary structure comprises 315 residues: Deoxyhypusine hydroxylase (315 aa).

HEAT-like PBS-type repeat units lie at residues 23-52 (IAKR…LNDK), 56-82 (LRHE…LVKN), 89-115 (VRHE…YSND), 179-205 (NRYR…GLKD), 211-237 (LRHE…CVLD), and 244-270 (VRHE…LLQD). Fe cation contacts are provided by H58, H91, and E92. 3 residues coordinate Fe cation: H213, H246, and E247.

Belongs to the deoxyhypusine hydroxylase family. It depends on Fe(2+) as a cofactor.

It catalyses the reaction [eIF5A protein]-deoxyhypusine + AH2 + O2 = [eIF5A protein]-hypusine + A + H2O. The protein operates within protein modification; eIF5A hypusination. In terms of biological role, catalyzes the hydroxylation of the N(6)-(4-aminobutyl)-L-lysine intermediate produced by deoxyhypusine synthase/DHPS on a critical lysine of the eukaryotic translation initiation factor 5A/eIF-5A. This is the second step of the post-translational modification of that lysine into an unusual amino acid residue named hypusine. Hypusination is unique to mature eIF-5A factor and is essential for its function. The polypeptide is Deoxyhypusine hydroxylase (dohh-1) (Dictyostelium discoideum (Social amoeba)).